Here is a 153-residue protein sequence, read N- to C-terminus: MAQEGGAVEQFGQWLWSNPIEQDPDDEMVDAREEEGQILYLDQQAGLRYSYSQSTTLKPTPPGQSNSAPVYRNAQRFQTEYLSPTTVTRSQVSVLSLSHTRPQLRPALSLLNSTPRANNQPWVATLIPSQSAGPPQRSSEPKRLTGRNSRNQR.

Disordered regions lie at residues 1-24 and 121-153; these read MAQEGGAVEQFGQWLWSNPIEQDP and PWVATLIPSQSAGPPQRSSEPKRLTGRNSRNQR. Over residues 121-138 the composition is skewed to polar residues; the sequence is PWVATLIPSQSAGPPQRS.

Belongs to the luteoviruses movement protein family.

Functionally, transports viral genome to neighboring plant cells directly through plasmosdesmata, without any budding. The movement protein allows efficient cell to cell propagation, by bypassing the host cell wall barrier. The protein is Movement protein of Avena byzantina (Oat).